The sequence spans 458 residues: LysM domain-containing protein ARB_05157 (458 aa).

A signal peptide spans 1–19; sequence MVSLKVCFLLLASSELAFG. Residues 157-203 form the LysM 1 domain; that stretch reads AFHLVKQGEDCGTISATYGITSAQFLAWNPSAGKDCTGLWANAYACV. The interval 210–232 is disordered; the sequence is PPKTTSQAPQPTPTKPSNGIETP. Over residues 212–229 the composition is skewed to polar residues; sequence KTTSQAPQPTPTKPSNGI. LysM domains follow at residues 245 to 291, 325 to 371, and 409 to 455; these read KFHL…YACV, KFYL…YSCV, and KFHF…YLCV.

It localises to the secreted. Functionally, might have a role in sequestration of chitin oligosaccharides (breakdown products of fungal cell walls that are released during invasion and act as triggers of host immunity) to dampen host defense. This is LysM domain-containing protein ARB_05157 from Arthroderma benhamiae (strain ATCC MYA-4681 / CBS 112371) (Trichophyton mentagrophytes).